The chain runs to 637 residues: Conglutin beta 5 (637 aa).

The N-terminal stretch at 1–30 (MAKMRVRFPMLVLLLGVVFLLAVSIGIAYG) is a signal peptide. 3 stretches are compositionally biased toward basic and acidic residues: residues 33 to 105 (DVIK…REQE), 136 to 174 (RREE…REQE), and 184 to 203 (DYGR…REQE). Disordered regions lie at residues 33–221 (DVIK…YFSS) and 384–439 (EQED…LRSN). Positions 217 to 375 (YYFSSERFQT…TFNTHYEEIQ (159 aa)) constitute a Cupin type-1 1 domain. Residues 389–417 (EQRREQEQSHQDEGVIVRVSKEQIQELRK) are compositionally biased toward basic and acidic residues. The Cupin type-1 2 domain maps to 434–594 (FNLRSNEPIY…IFPGSAEDVE (161 aa)). N-linked (GlcNAc...) asparagine glycosylation occurs at N544. Positions 606–615 (ANAQPQQQQQ) are enriched in low complexity. The disordered stretch occupies residues 606 to 626 (ANAQPQQQQQQREKEGRRGRR).

The protein belongs to the 7S seed storage protein family. Component of globulins complexes which accumulate in seeds.

Functionally, seed storage protein. Accumulates during seed development and is hydrolyzed after germination to provide a carbon and nitrogen source for the developing seedling. The sequence is that of Conglutin beta 5 from Lupinus angustifolius (Narrow-leaved blue lupine).